The sequence spans 313 residues: Carbamate kinase 2 (313 aa).

It belongs to the carbamate kinase family.

It localises to the cytoplasm. The enzyme catalyses hydrogencarbonate + NH4(+) + ATP = carbamoyl phosphate + ADP + H2O + H(+). Its pathway is metabolic intermediate metabolism; carbamoyl phosphate degradation; CO(2) and NH(3) from carbamoyl phosphate: step 1/1. This Staphylococcus aureus (strain bovine RF122 / ET3-1) protein is Carbamate kinase 2 (arcC2).